A 258-amino-acid chain; its full sequence is Snake venom serine protease CL2 (258 aa).

Residues 1-18 (MVLIRVLANLLIIQLSYA) form the signal peptide. Residues 19–24 (QKSSEL) constitute a propeptide that is removed on maturation. A Peptidase S1 domain is found at 25 to 249 (VIGGDECNIN…YTDWIKSIIA (225 aa)). 6 cysteine pairs are disulfide-bonded: C31–C163, C50–C66, C98–C256, C142–C210, C174–C189, and C200–C225. N-linked (GlcNAc...) asparagine glycosylation occurs at N44. Residue H65 is the Charge relay system of the active site. An N-linked (GlcNAc...) asparagine glycan is attached at N103. D110 acts as the Charge relay system in catalysis. The N-linked (GlcNAc...) asparagine glycan is linked to N121. S204 functions as the Charge relay system in the catalytic mechanism. Residue N251 is glycosylated (N-linked (GlcNAc...) asparagine).

Belongs to the peptidase S1 family. Snake venom subfamily. In terms of assembly, monomer. As to expression, expressed by the venom gland.

It localises to the secreted. Its function is as follows. Snake venom serine protease that may act in the hemostasis system of the prey. This is Snake venom serine protease CL2 from Trimeresurus stejnegeri (Chinese green tree viper).